A 152-amino-acid chain; its full sequence is Putative superoxide dismutase [Cu-Zn] (152 aa).

The Cu cation site is built by His-43, His-45, and His-60. An intrachain disulfide couples Cys-54 to Cys-144. Zn(2+) is bound by residues His-60, His-68, His-77, and Asp-80. His-118 lines the Cu cation pocket.

Belongs to the Cu-Zn superoxide dismutase family. Cu cation is required as a cofactor. It depends on Zn(2+) as a cofactor.

It catalyses the reaction 2 superoxide + 2 H(+) = H2O2 + O2. In terms of biological role, destroys radicals which are normally produced within the cells and which are toxic to biological systems. In Orgyia pseudotsugata (Douglas-fir tussock moth), this protein is Putative superoxide dismutase [Cu-Zn] (SOD).